We begin with the raw amino-acid sequence, 442 residues long: tRNA modification GTPase MnmE (442 aa).

Residues arginine 22, glutamate 79, and lysine 119 each contribute to the (6S)-5-formyl-5,6,7,8-tetrahydrofolate site. A TrmE-type G domain is found at 216 to 366 (GIKTCLVGAP…LLEKIKSIFA (151 aa)). A K(+)-binding site is contributed by asparagine 226. GTP contacts are provided by residues 226–231 (NSGKSS), 245–251 (SEIPGTT), and 270–273 (DTAG). Residue serine 230 coordinates Mg(2+). Serine 245, isoleucine 247, and threonine 250 together coordinate K(+). Threonine 251 lines the Mg(2+) pocket. Lysine 442 is a binding site for (6S)-5-formyl-5,6,7,8-tetrahydrofolate.

The protein belongs to the TRAFAC class TrmE-Era-EngA-EngB-Septin-like GTPase superfamily. TrmE GTPase family. Homodimer. Heterotetramer of two MnmE and two MnmG subunits. It depends on K(+) as a cofactor.

The protein resides in the cytoplasm. Functionally, exhibits a very high intrinsic GTPase hydrolysis rate. Involved in the addition of a carboxymethylaminomethyl (cmnm) group at the wobble position (U34) of certain tRNAs, forming tRNA-cmnm(5)s(2)U34. The protein is tRNA modification GTPase MnmE of Mesomycoplasma hyopneumoniae (strain 232) (Mycoplasma hyopneumoniae).